We begin with the raw amino-acid sequence, 343 residues long: Tribbles homolog 2 (343 aa).

The tract at residues 25-50 is disordered; it reads EELSSIRSAEPSQSFSPNLGSPSPPE. Over residues 29–45 the composition is skewed to polar residues; sequence SIRSAEPSQSFSPNLGS. One can recognise a Protein kinase domain in the interval 61–308; sequence IGKYLLLEPL…SQEILDHPWF (248 aa).

Belongs to the protein kinase superfamily. CAMK Ser/Thr protein kinase family. Tribbles subfamily. In terms of tissue distribution, highly expressed in the thyroid, also present in ovary and cerebrum.

The protein localises to the cytoplasm. It localises to the cytoskeleton. Functionally, interacts with MAPK kinases and regulates activation of MAP kinases. Does not display kinase activity. This is Tribbles homolog 2 from Canis lupus familiaris (Dog).